The sequence spans 271 residues: tRNA pseudouridine synthase A (271 aa).

The active-site Nucleophile is the aspartate 54. Tyrosine 112 serves as a coordination point for substrate.

It belongs to the tRNA pseudouridine synthase TruA family. As to quaternary structure, homodimer.

It carries out the reaction uridine(38/39/40) in tRNA = pseudouridine(38/39/40) in tRNA. Its function is as follows. Formation of pseudouridine at positions 38, 39 and 40 in the anticodon stem and loop of transfer RNAs. The sequence is that of tRNA pseudouridine synthase A from Acinetobacter baylyi (strain ATCC 33305 / BD413 / ADP1).